The primary structure comprises 152 residues: Large-conductance mechanosensitive channel (152 aa).

Transmembrane regions (helical) follow at residues 14–34 (VIDL…VTSL) and 81–101 (GLFL…FIAI).

It belongs to the MscL family. Homopentamer.

It localises to the cell membrane. Functionally, channel that opens in response to stretch forces in the membrane lipid bilayer. May participate in the regulation of osmotic pressure changes within the cell. The polypeptide is Large-conductance mechanosensitive channel (Clostridium perfringens (strain 13 / Type A)).